The following is a 139-amino-acid chain: Putative pre-16S rRNA nuclease (139 aa).

The protein belongs to the YqgF nuclease family.

The protein resides in the cytoplasm. Its function is as follows. Could be a nuclease involved in processing of the 5'-end of pre-16S rRNA. In Rubrobacter xylanophilus (strain DSM 9941 / JCM 11954 / NBRC 16129 / PRD-1), this protein is Putative pre-16S rRNA nuclease.